The chain runs to 214 residues: Ribonuclease HII (214 aa).

The RNase H type-2 domain maps to Glu26–Arg214. A divalent metal cation-binding residues include Asp32, Glu33, and Asp124.

This sequence belongs to the RNase HII family. Mn(2+) is required as a cofactor. Requires Mg(2+) as cofactor.

The protein resides in the cytoplasm. The enzyme catalyses Endonucleolytic cleavage to 5'-phosphomonoester.. Endonuclease that specifically degrades the RNA of RNA-DNA hybrids. The protein is Ribonuclease HII of Burkholderia orbicola (strain MC0-3).